We begin with the raw amino-acid sequence, 63 residues long: Bucandin (63 aa).

Intrachain disulfides connect C3–C24, C6–C11, C17–C39, C43–C55, and C56–C61.

As to expression, expressed by the venom gland.

Its subcellular location is the secreted. This toxin is described as enhancing presynaptic acetylcholine release, but neither experimental results, nor references to other sources are available. This Bungarus candidus (Malayan krait) protein is Bucandin.